A 1035-amino-acid polypeptide reads, in one-letter code: Protein SEY1 homolog (1035 aa).

The GB1/RHD3-type G domain occupies Asp32 to Ser267. Gly42 to Ser49 lines the GTP pocket.

Belongs to the TRAFAC class dynamin-like GTPase superfamily. GB1/RHD3 GTPase family. RHD3 subfamily.

It localises to the endoplasmic reticulum membrane. Functionally, probable GTP-binding protein that may be involved in cell development. This Giardia intestinalis (strain ATCC 50803 / WB clone C6) (Giardia lamblia) protein is Protein SEY1 homolog.